The following is a 1028-amino-acid chain: RNA cytidine acetyltransferase 1 (1028 aa).

Residues 286–295 (GRGKSAALGL) and arginine 460 contribute to the ATP site. The N-acetyltransferase domain maps to 548 to 731 (VLLGPVDESK…FAPFYISQIP (184 aa)). Acetyl-CoA-binding positions include 619–621 (IAV), 626–632 (MKMGYGS), and lysine 719. Positions 989-1028 (ISIESTKTDNKKEKPSGFDKSAKKRGNDKHSSTSNKKRRA) are disordered. The span at 994-1009 (TKTDNKKEKPSGFDKS) shows a compositional bias: basic and acidic residues.

This sequence belongs to the RNA cytidine acetyltransferase family. NAT10 subfamily.

The protein localises to the nucleus. The protein resides in the nucleolus. The catalysed reaction is a cytidine in 18S rRNA + acetyl-CoA + ATP + H2O = an N(4)-acetylcytidine in 18S rRNA + ADP + phosphate + CoA + H(+). It carries out the reaction a cytidine in tRNA + acetyl-CoA + ATP + H2O = an N(4)-acetylcytidine in tRNA + ADP + phosphate + CoA + H(+). RNA cytidine acetyltransferase with specificity toward both 18S rRNA and tRNAs. Catalyzes the formation of N(4)-acetylcytidine (ac4C) in 18S rRNA. Required for early nucleolar cleavages of precursor rRNA at sites A0, A1 and A2 during 18S rRNA synthesis. Catalyzes the formation of ac4C in serine and leucine tRNAs. Requires a tRNA-binding adapter protein for full tRNA acetyltransferase activity but not for 18S rRNA acetylation. In Arabidopsis thaliana (Mouse-ear cress), this protein is RNA cytidine acetyltransferase 1.